Consider the following 257-residue polypeptide: Urease accessory protein UreD (257 aa).

The protein belongs to the UreD family. UreD, UreF and UreG form a complex that acts as a GTP-hydrolysis-dependent molecular chaperone, activating the urease apoprotein by helping to assemble the nickel containing metallocenter of UreC. The UreE protein probably delivers the nickel.

It localises to the cytoplasm. In terms of biological role, required for maturation of urease via the functional incorporation of the urease nickel metallocenter. The chain is Urease accessory protein UreD from Ruegeria pomeroyi (strain ATCC 700808 / DSM 15171 / DSS-3) (Silicibacter pomeroyi).